The chain runs to 591 residues: Aspartate--tRNA(Asp/Asn) ligase (591 aa).

Glu-175 is an L-aspartate binding site. The segment at 199–202 (QQFK) is aspartate. L-aspartate is bound by residues Arg-221 and His-453. 221–223 (RDE) provides a ligand contact to ATP. Glu-486 serves as a coordination point for ATP. Arg-493 is a binding site for L-aspartate. An ATP-binding site is contributed by 538–541 (GIDR).

This sequence belongs to the class-II aminoacyl-tRNA synthetase family. Type 1 subfamily. As to quaternary structure, homodimer.

The protein localises to the cytoplasm. It catalyses the reaction tRNA(Asx) + L-aspartate + ATP = L-aspartyl-tRNA(Asx) + AMP + diphosphate. In terms of biological role, aspartyl-tRNA synthetase with relaxed tRNA specificity since it is able to aspartylate not only its cognate tRNA(Asp) but also tRNA(Asn). Reaction proceeds in two steps: L-aspartate is first activated by ATP to form Asp-AMP and then transferred to the acceptor end of tRNA(Asp/Asn). This chain is Aspartate--tRNA(Asp/Asn) ligase, found in Cereibacter sphaeroides (strain ATCC 17029 / ATH 2.4.9) (Rhodobacter sphaeroides).